The following is a 607-amino-acid chain: Frizzled and smoothened-like protein J (607 aa).

An N-terminal signal peptide occupies residues 1-26 (MVSNKNLLPIIYIFFIILYFGDVAKS). Over 27–247 (QYFPLDKGAT…QWRNIYRLSD (221 aa)) the chain is Extracellular. The region spanning 32–182 (DKGATCQKYR…LSYTNTCENT (151 aa)) is the FZ domain. 3 disulfides stabilise this stretch: Cys-37–Cys-108, Cys-50–Cys-101, and Cys-127–Cys-179. N-linked (GlcNAc...) asparagine glycans are attached at residues Asn-63, Asn-133, Asn-155, Asn-164, Asn-190, and Asn-222. A helical transmembrane segment spans residues 248–268 (VLSILSCILTLFLVITLGIIN). Topologically, residues 269–276 (PKVSRFDK) are cytoplasmic. Residues 277 to 297 (INVMLLSSIFLQAFSGALMTF) form a helical membrane-spanning segment. Asn-298 carries an N-linked (GlcNAc...) asparagine glycan. At 298–330 (NGTENTLCPEDGRFASYIDRMCVATGFLLHGSS) the chain is on the extracellular side. A helical transmembrane segment spans residues 331 to 351 (LLVVQWWCVLSFEVWFTIFQV). At 352–358 (GKKQKDR) the chain is on the cytoplasmic side. The helical transmembrane segment at 359–379 (FIYYLVASLIIAWIPPIVSIS) threads the bilayer. The Extracellular portion of the chain corresponds to 380–401 (KNEYSGGPANPFCWLTTFNYRR). Residues 402-422 (FAFWLPMGIFLCLGGVFLILL) form a helical membrane-spanning segment. Residues 423 to 451 (MREIYVIVSGNVQSTKESRFKVLKMEAKP) lie on the Cytoplasmic side of the membrane. A helical transmembrane segment spans residues 452-472 (IISLIMYFSCLLYLFIYDQWI). At 473–508 (NNHMHVYTDSIPSYALCLLTSTSTNDCLLKAPDITG) the chain is on the extracellular side. A helical transmembrane segment spans residues 509–529 (LGYFIYSIRVFGVYAFIIYGI). Over 530–607 (SKKTLQIWKY…VELDSNSDAL (78 aa)) the chain is Cytoplasmic. The short motif at 532–537 (KTLQIW) is the Lys-Thr-X-X-X-Trp motif, mediates interaction with the PDZ domain of Dvl family members element. Low complexity predominate over residues 559–575 (TAKSSNSNNSSTTNNIS). The interval 559 to 607 (TAKSSNSNNSSTTNNISVKASSNMEYETRQENENGDSQSVELDSNSDAL) is disordered. A compositionally biased stretch (polar residues) spans 593–607 (GDSQSVELDSNSDAL).

The protein belongs to the G-protein coupled receptor Fz/Smo family.

The protein resides in the membrane. This Dictyostelium discoideum (Social amoeba) protein is Frizzled and smoothened-like protein J (fslJ-1).